A 206-amino-acid polypeptide reads, in one-letter code: Thiamine-phosphate synthase (206 aa).

Residues 39-43 (QYREK) and Asn-74 each bind 4-amino-2-methyl-5-(diphosphooxymethyl)pyrimidine. Residues Asp-75 and Asp-94 each coordinate Mg(2+). Ser-112 provides a ligand contact to 4-amino-2-methyl-5-(diphosphooxymethyl)pyrimidine. 138-140 (TNT) contacts 2-[(2R,5Z)-2-carboxy-4-methylthiazol-5(2H)-ylidene]ethyl phosphate. Position 141 (Lys-141) interacts with 4-amino-2-methyl-5-(diphosphooxymethyl)pyrimidine. 2-[(2R,5Z)-2-carboxy-4-methylthiazol-5(2H)-ylidene]ethyl phosphate contacts are provided by residues Gly-170 and 190–191 (IS).

It belongs to the thiamine-phosphate synthase family. Requires Mg(2+) as cofactor.

The enzyme catalyses 2-[(2R,5Z)-2-carboxy-4-methylthiazol-5(2H)-ylidene]ethyl phosphate + 4-amino-2-methyl-5-(diphosphooxymethyl)pyrimidine + 2 H(+) = thiamine phosphate + CO2 + diphosphate. It carries out the reaction 2-(2-carboxy-4-methylthiazol-5-yl)ethyl phosphate + 4-amino-2-methyl-5-(diphosphooxymethyl)pyrimidine + 2 H(+) = thiamine phosphate + CO2 + diphosphate. It catalyses the reaction 4-methyl-5-(2-phosphooxyethyl)-thiazole + 4-amino-2-methyl-5-(diphosphooxymethyl)pyrimidine + H(+) = thiamine phosphate + diphosphate. It functions in the pathway cofactor biosynthesis; thiamine diphosphate biosynthesis; thiamine phosphate from 4-amino-2-methyl-5-diphosphomethylpyrimidine and 4-methyl-5-(2-phosphoethyl)-thiazole: step 1/1. Its function is as follows. Condenses 4-methyl-5-(beta-hydroxyethyl)thiazole monophosphate (THZ-P) and 2-methyl-4-amino-5-hydroxymethyl pyrimidine pyrophosphate (HMP-PP) to form thiamine monophosphate (TMP). The protein is Thiamine-phosphate synthase of Oceanobacillus iheyensis (strain DSM 14371 / CIP 107618 / JCM 11309 / KCTC 3954 / HTE831).